The primary structure comprises 250 residues: 2,3-bisphosphoglycerate-dependent phosphoglycerate mutase (250 aa).

Substrate-binding positions include 10 to 17 (RHGESQWN), 23 to 24 (TG), Arg-62, 89 to 92 (ERHY), Lys-100, 116 to 117 (RR), and 185 to 186 (GN). His-11 (tele-phosphohistidine intermediate) is an active-site residue. The Proton donor/acceptor role is filled by Glu-89.

Belongs to the phosphoglycerate mutase family. BPG-dependent PGAM subfamily. As to quaternary structure, homodimer.

It carries out the reaction (2R)-2-phosphoglycerate = (2R)-3-phosphoglycerate. The protein operates within carbohydrate degradation; glycolysis; pyruvate from D-glyceraldehyde 3-phosphate: step 3/5. In terms of biological role, catalyzes the interconversion of 2-phosphoglycerate and 3-phosphoglycerate. The protein is 2,3-bisphosphoglycerate-dependent phosphoglycerate mutase of Yersinia pseudotuberculosis serotype IB (strain PB1/+).